A 357-amino-acid polypeptide reads, in one-letter code: Chorismate synthase (357 aa).

Arg-47 is an NADP(+) binding site. FMN-binding positions include 123 to 125 (RAS), Gly-281, 296 to 300 (KPTSS), and Arg-324.

Belongs to the chorismate synthase family. In terms of assembly, homotetramer. FMNH2 serves as cofactor.

The catalysed reaction is 5-O-(1-carboxyvinyl)-3-phosphoshikimate = chorismate + phosphate. It participates in metabolic intermediate biosynthesis; chorismate biosynthesis; chorismate from D-erythrose 4-phosphate and phosphoenolpyruvate: step 7/7. In terms of biological role, catalyzes the anti-1,4-elimination of the C-3 phosphate and the C-6 proR hydrogen from 5-enolpyruvylshikimate-3-phosphate (EPSP) to yield chorismate, which is the branch point compound that serves as the starting substrate for the three terminal pathways of aromatic amino acid biosynthesis. This reaction introduces a second double bond into the aromatic ring system. The polypeptide is Chorismate synthase (Chlamydia trachomatis serovar A (strain ATCC VR-571B / DSM 19440 / HAR-13)).